The chain runs to 158 residues: Ribosomal RNA large subunit methyltransferase H (158 aa).

S-adenosyl-L-methionine is bound by residues leucine 72, glycine 103, and 122 to 127 (LGNLTL).

The protein belongs to the RNA methyltransferase RlmH family. Homodimer.

It is found in the cytoplasm. The catalysed reaction is pseudouridine(1915) in 23S rRNA + S-adenosyl-L-methionine = N(3)-methylpseudouridine(1915) in 23S rRNA + S-adenosyl-L-homocysteine + H(+). Functionally, specifically methylates the pseudouridine at position 1915 (m3Psi1915) in 23S rRNA. In Acidiphilium cryptum (strain JF-5), this protein is Ribosomal RNA large subunit methyltransferase H.